The chain runs to 115 residues: Large ribosomal subunit protein bL19 (115 aa).

This sequence belongs to the bacterial ribosomal protein bL19 family.

This protein is located at the 30S-50S ribosomal subunit interface and may play a role in the structure and function of the aminoacyl-tRNA binding site. The sequence is that of Large ribosomal subunit protein bL19 from Francisella tularensis subsp. holarctica (strain FTNF002-00 / FTA).